An 854-amino-acid polypeptide reads, in one-letter code: Cell division control protein 24 (854 aa).

Over residues 1–14 (MAIQTRFASGTSLS) the composition is skewed to polar residues. The disordered stretch occupies residues 1 to 24 (MAIQTRFASGTSLSDLKPKPSATS). The 112-residue stretch at 135–246 (PNMEDTLLTF…VVETLMNSSP (112 aa)) folds into the Calponin-homology (CH) domain. In terms of domain architecture, DH spans 278 to 454 (EYVKIIKEFV…KNIARSINEN (177 aa)). The PH domain occupies 478–668 (RISKFGELLY…WSSCLQQLIH (191 aa)). Disordered regions lie at residues 542–571 (ISAS…SNNI) and 674–745 (QFKA…FESE). Over residues 682-707 (STSTTSSTAKSSSMMSPTTTMNTPNH) the composition is skewed to low complexity. Positions 761 to 854 (SILFRISYNN…NEKFLNIRLY (94 aa)) constitute a PB1 domain.

As to quaternary structure, interacts with AXL2.

In terms of biological role, promotes the exchange of CDC42-bound GDP by GTP. Controls the polarity of calmodulin, and the calcium regulatory process of bud emergence. CDC24 may be involved in the initial selection and organization of the budding site. The sequence is that of Cell division control protein 24 (CDC24) from Saccharomyces cerevisiae (strain ATCC 204508 / S288c) (Baker's yeast).